Reading from the N-terminus, the 179-residue chain is Large ribosomal subunit protein uL6 (179 aa).

This sequence belongs to the universal ribosomal protein uL6 family. As to quaternary structure, part of the 50S ribosomal subunit.

Its function is as follows. This protein binds to the 23S rRNA, and is important in its secondary structure. It is located near the subunit interface in the base of the L7/L12 stalk, and near the tRNA binding site of the peptidyltransferase center. The chain is Large ribosomal subunit protein uL6 from Spiroplasma kunkelii.